The following is a 456-amino-acid chain: GTPase Der (456 aa).

EngA-type G domains follow at residues 3-167 (FTIA…PPSD) and 185-360 (IRVA…AVWN). GTP contacts are provided by residues 9–16 (GRPNVGKS), 56–60 (DTAGL), and 119–122 (NKSE). The tract at residues 162-181 (IVPPSDDEDDEREETDEERA) is disordered. The segment covering 166–178 (SDDEDDEREETDE) has biased composition (acidic residues). GTP-binding positions include 191 to 198 (GRPNAGKS), 238 to 242 (DTAGL), and 303 to 306 (NKWD). Residues 361-445 (RRVPTAALNR…PVRITLREKA (85 aa)) form the KH-like domain.

Belongs to the TRAFAC class TrmE-Era-EngA-EngB-Septin-like GTPase superfamily. EngA (Der) GTPase family. Associates with the 50S ribosomal subunit.

In terms of biological role, GTPase that plays an essential role in the late steps of ribosome biogenesis. This Bradyrhizobium sp. (strain ORS 278) protein is GTPase Der.